The following is a 267-amino-acid chain: Urease accessory protein UreD (267 aa).

The protein belongs to the UreD family. As to quaternary structure, ureD, UreF and UreG form a complex that acts as a GTP-hydrolysis-dependent molecular chaperone, activating the urease apoprotein by helping to assemble the nickel containing metallocenter of UreC. The UreE protein probably delivers the nickel.

It localises to the cytoplasm. Its function is as follows. Required for maturation of urease via the functional incorporation of the urease nickel metallocenter. The sequence is that of Urease accessory protein UreD from Synechococcus sp. (strain JA-2-3B'a(2-13)) (Cyanobacteria bacterium Yellowstone B-Prime).